A 611-amino-acid chain; its full sequence is Dihydroxy-acid dehydratase (611 aa).

Asp-81 lines the Mg(2+) pocket. Residue Cys-122 coordinates [2Fe-2S] cluster. The Mg(2+) site is built by Asp-123 and Lys-124. An N6-carboxylysine modification is found at Lys-124. Cys-195 contacts [2Fe-2S] cluster. Glu-491 is a binding site for Mg(2+). Ser-517 serves as the catalytic Proton acceptor.

Belongs to the IlvD/Edd family. As to quaternary structure, homodimer. It depends on [2Fe-2S] cluster as a cofactor. Mg(2+) serves as cofactor.

The enzyme catalyses (2R)-2,3-dihydroxy-3-methylbutanoate = 3-methyl-2-oxobutanoate + H2O. It catalyses the reaction (2R,3R)-2,3-dihydroxy-3-methylpentanoate = (S)-3-methyl-2-oxopentanoate + H2O. It participates in amino-acid biosynthesis; L-isoleucine biosynthesis; L-isoleucine from 2-oxobutanoate: step 3/4. The protein operates within amino-acid biosynthesis; L-valine biosynthesis; L-valine from pyruvate: step 3/4. Functionally, functions in the biosynthesis of branched-chain amino acids. Catalyzes the dehydration of (2R,3R)-2,3-dihydroxy-3-methylpentanoate (2,3-dihydroxy-3-methylvalerate) into 2-oxo-3-methylpentanoate (2-oxo-3-methylvalerate) and of (2R)-2,3-dihydroxy-3-methylbutanoate (2,3-dihydroxyisovalerate) into 2-oxo-3-methylbutanoate (2-oxoisovalerate), the penultimate precursor to L-isoleucine and L-valine, respectively. This is Dihydroxy-acid dehydratase from Allorhizobium ampelinum (strain ATCC BAA-846 / DSM 112012 / S4) (Agrobacterium vitis (strain S4)).